Consider the following 801-residue polypeptide: U-box domain-containing protein 34 (801 aa).

The tract at residues 205–309 (RSPTLPDPRQ…PETSRKSKKV (105 aa)) is disordered. Positions 236–254 (LTCNKPKTPQSSKASSATT) are enriched in polar residues. The span at 289-309 (VSEHRDSDRSPPETSRKSKKV) shows a compositional bias: basic and acidic residues. Residues 301 to 395 (ETSRKSKKVE…ETAKALLARE (95 aa)) adopt a coiled-coil conformation. The 264-residue stretch at 442–705 (FSPEKVIGEG…DLKSEVIPVL (264 aa)) folds into the Protein kinase domain. ATP contacts are provided by residues 448–456 (IGEGGYGKV) and K469. The Proton acceptor role is filled by D564. Residues 724–797 (RAPSHYFCPI…RDWKSRVRFS (74 aa)) form the U-box domain.

The protein belongs to the protein kinase superfamily. Ser/Thr protein kinase family.

It catalyses the reaction L-seryl-[protein] + ATP = O-phospho-L-seryl-[protein] + ADP + H(+). The catalysed reaction is L-threonyl-[protein] + ATP = O-phospho-L-threonyl-[protein] + ADP + H(+). The enzyme catalyses S-ubiquitinyl-[E2 ubiquitin-conjugating enzyme]-L-cysteine + [acceptor protein]-L-lysine = [E2 ubiquitin-conjugating enzyme]-L-cysteine + N(6)-ubiquitinyl-[acceptor protein]-L-lysine.. It participates in protein modification; protein ubiquitination. Its function is as follows. Functions as an E3 ubiquitin ligase. The chain is U-box domain-containing protein 34 (PUB34) from Arabidopsis thaliana (Mouse-ear cress).